A 353-amino-acid chain; its full sequence is ATP-dependent kinase YFH7 (353 aa).

31–39 serves as a coordination point for ATP; the sequence is GSPGSGKST.

This sequence belongs to the YFH7 family.

Functionally, ATP-dependent kinase that could be involved in endoplasmic reticulum membrane assembly. In Saccharomyces cerevisiae (strain ATCC 204508 / S288c) (Baker's yeast), this protein is ATP-dependent kinase YFH7 (YFH7).